A 383-amino-acid polypeptide reads, in one-letter code: Putative glutamate--cysteine ligase 2-2 (383 aa).

Residues 35-56 form a disordered region; sequence RGDRDGAGGPPGGADPDGDLDG.

The protein belongs to the glutamate--cysteine ligase type 2 family. YbdK subfamily.

The enzyme catalyses L-cysteine + L-glutamate + ATP = gamma-L-glutamyl-L-cysteine + ADP + phosphate + H(+). Its function is as follows. ATP-dependent carboxylate-amine ligase which exhibits weak glutamate--cysteine ligase activity. The polypeptide is Putative glutamate--cysteine ligase 2-2 (Frankia alni (strain DSM 45986 / CECT 9034 / ACN14a)).